The chain runs to 338 residues: Clathrin light chain 1 (338 aa).

Residues Met1 to Arg111 form a disordered region. Polar residues-rich tracts occupy residues Ser29–Asn47 and Ser61–Ser73. Residues Asn102–Arg111 are compositionally biased toward basic and acidic residues. Positions Asn102–Arg163 are involved in binding clathrin heavy chain. The stretch at Leu122–Asp142 forms a coiled coil. Residues Ile192 to Glu338 form a disordered region. A compositionally biased stretch (basic and acidic residues) spans Pro197 to Pro212. Residues Asn241 to Ala253 show a composition bias toward pro residues. A compositionally biased stretch (basic and acidic residues) spans Lys254 to Pro304.

It belongs to the clathrin light chain family. As to quaternary structure, clathrin coats are formed from molecules containing 3 heavy chains and 3 light chains.

It localises to the cytoplasmic vesicle membrane. The protein resides in the membrane. Its subcellular location is the coated pit. Its function is as follows. Clathrin is the major protein of the polyhedral coat of coated pits and vesicles. The polypeptide is Clathrin light chain 1 (Arabidopsis thaliana (Mouse-ear cress)).